Consider the following 109-residue polypeptide: Phycoerythrin alpha-1 subunit (109 aa).

The (2R,3E)-phycocyanobilin site is built by Val6, Ala16, Phe17, Pro20, Asp27, Ala28, and Ala39.

It belongs to the phycoerythrin family. As to quaternary structure, heterotetramer of 2 identical alpha chains and 2 identical beta chains which form 2 alpha-beta heterodimers within the heterotetramer. The two alpha-beta heterodimers are rotated to an open configuration in contrast to the closed configuration found in other cryptophyte species due to the insertion of a single amino acid, Asp-65, in a conserved region of the alpha chain. In the open form, the central chromophores are not in physical contact but are separated by a water-filled channel. Post-translationally, contains three phycocyanobilin chromophores with binding mediated by both the alpha and beta subunits.

The protein resides in the plastid. It localises to the chloroplast thylakoid membrane. Functionally, light-harvesting photosynthetic tetrapyrrole chromophore-protein from the phycobiliprotein complex. In Hemiselmis virescens, this protein is Phycoerythrin alpha-1 subunit.